Here is a 624-residue protein sequence, read N- to C-terminus: (-)-beta-phellandrene synthase 2, chloroplastic (624 aa).

A chloroplast-targeting transit peptide spans 1–47 (MALVSVAPLVSMRRSLFSSPYELKSIDKTIPNLVMCRKRMLGRPSIR). Mg(2+) contacts are provided by aspartate 375, aspartate 379, and aspartate 527. Positions 375–379 (DDIYD) match the DDXXD motif motif.

The protein belongs to the terpene synthase family. Tpsd subfamily. The cofactor is Mg(2+). It depends on Mn(2+) as a cofactor.

Its subcellular location is the plastid. The protein resides in the chloroplast. It carries out the reaction (2E)-geranyl diphosphate = (-)-beta-phellandrene + diphosphate. It functions in the pathway terpene metabolism; oleoresin biosynthesis. Its pathway is secondary metabolite biosynthesis; terpenoid biosynthesis. Its function is as follows. Monoterpene synthase (TPS) involved in the biosynthesis of monoterpene natural products included in conifer oleoresin secretions and volatile emissions; these compounds contribute to biotic and abiotic stress defense against herbivores and pathogens. Catalyzes the conversion of (2E)-geranyl diphosphate (GPP) to (-)-beta-phellandrene. This is (-)-beta-phellandrene synthase 2, chloroplastic from Pinus contorta (Shore pine).